Here is a 944-residue protein sequence, read N- to C-terminus: LPS-assembly protein LptD (944 aa).

An N-terminal signal peptide occupies residues 1–33 (MALKSPAFRRKFPLLVTGGLLALQPLATSFVVA). Positions 52–102 (KATGNLPPRPVHPGAAAASSGAEAPGEVGEAQAEKPMLVTESKGRGLKSRS) are disordered. Over residues 64 to 82 (PGAAAASSGAEAPGEVGEA) the composition is skewed to low complexity.

The protein belongs to the LptD family. Component of the lipopolysaccharide transport and assembly complex. Interacts with LptE and LptA.

It localises to the cell outer membrane. Together with LptE, is involved in the assembly of lipopolysaccharide (LPS) at the surface of the outer membrane. This chain is LPS-assembly protein LptD, found in Pseudomonas entomophila (strain L48).